We begin with the raw amino-acid sequence, 493 residues long: Cobyric acid synthase (493 aa).

Positions 252–440 constitute a GATase cobBQ-type domain; it reads PVKIVVLRLR…IHGIFESDSL (189 aa). The Nucleophile role is filled by Cys333. Residue His432 is part of the active site.

The protein belongs to the CobB/CobQ family. CobQ subfamily.

The protein operates within cofactor biosynthesis; adenosylcobalamin biosynthesis. Functionally, catalyzes amidations at positions B, D, E, and G on adenosylcobyrinic A,C-diamide. NH(2) groups are provided by glutamine, and one molecule of ATP is hydrogenolyzed for each amidation. This Thermodesulfovibrio yellowstonii (strain ATCC 51303 / DSM 11347 / YP87) protein is Cobyric acid synthase.